A 1483-amino-acid chain; its full sequence is Heme-responsive zinc finger transcription factor HAP1 (1483 aa).

A compositionally biased stretch (polar residues) spans 1–50 (MSNTPYNSSVPSIASMTQSSVSRSPNMHTATTPGANTSSNSPPLHMSSDS). A disordered region spans residues 1–56 (MSNTPYNSSVPSIASMTQSSVSRSPNMHTATTPGANTSSNSPPLHMSSDSSKIKRK). Residues cysteine 64, cysteine 67, cysteine 74, cysteine 81, cysteine 84, and cysteine 93 each coordinate Zn(2+). The segment at residues 64–93 (CTICRKRKVKCDKLRPHCQQCTKTGVAHLC) is a DNA-binding region (zn(2)-C6 fungal-type). Residues 105–134 (EKELLKDNELKKLRERVKSLEKTLSKVHSS) adopt a coiled-coil conformation. The segment covering 162–176 (VNANTGSASSASHMH) has biased composition (polar residues). The disordered stretch occupies residues 162 to 208 (VNANTGSASSASHMHQQQQQQQQQEQQQDFSRSANANANSSSLSISN). A compositionally biased stretch (low complexity) spans 177–208 (QQQQQQQQQEQQQDFSRSANANANSSSLSISN). Residues 244–444 (KGDPYLKLLW…NTIPHHQPQS (201 aa)) form a heme-responsive; required for HMC formation region. HRM repeat units follow at residues 280 to 285 (KCPINH), 299 to 304 (KCPVDH), 323 to 328 (KCPVDH), 347 to 352 (RCPVDH), 389 to 394 (KCPVDH), and 415 to 420 (RCPIDH). Polar residues-rich tracts occupy residues 432 to 447 (STHN…SGSH) and 706 to 734 (QLNA…NPTL). Disordered stretches follow at residues 432–458 (STHN…NRKH) and 706–767 (QLNA…KENQ). The span at 735 to 759 (NNNMSAATTNSSSRSGSADSRSGSN) shows a compositional bias: low complexity. One copy of the HRM 7 repeat lies at 1192–1197 (KCPVYQ). Disordered regions lie at residues 1266–1289 (DGYI…SNGL) and 1386–1411 (NTDT…ASNS). The segment covering 1388 to 1411 (DTSANGSALSTLTSPQGSDLASNS) has biased composition (polar residues).

As to quaternary structure, binds DNA as a homodimer. Interacts with SRO9 and YDJ1. In the absence of heme, binds to at least four cellular proteins, including YDJ1 and SRO9, forming a high-molecular-weight complex (HMC) which results in repression of its activity and dictates its DNA-binding specificity.

The protein localises to the nucleus. In terms of biological role, regulation of oxygen dependent gene expression. It modulates the expression of Iso-1 (CYP1) and Iso-2 (CYP3) cytochrome c. In response to heme, promotes transcription of genes encoding functions required for respiration, controlling oxidative damage and repression of anaerobic genes. Binds to the sequence 5'-CGGNNNTNNCGG-3'. This Saccharomyces cerevisiae (strain JAY291) (Baker's yeast) protein is Heme-responsive zinc finger transcription factor HAP1 (HAP1).